Here is a 680-residue protein sequence, read N- to C-terminus: tRNA 5-methylaminomethyl-2-thiouridine biosynthesis bifunctional protein MnmC (680 aa).

The interval 1–245 is tRNA (mnm(5)s(2)U34)-methyltransferase; it reads MSHPPIQTAT…KREMLTGILP (245 aa). Positions 270–680 are FAD-dependent cmnm(5)s(2)U34 oxidoreductase; it reads IGGGIVSALT…PVQQRVSVLS (411 aa).

In the N-terminal section; belongs to the methyltransferase superfamily. tRNA (mnm(5)s(2)U34)-methyltransferase family. This sequence in the C-terminal section; belongs to the DAO family. FAD serves as cofactor.

Its subcellular location is the cytoplasm. The catalysed reaction is 5-aminomethyl-2-thiouridine(34) in tRNA + S-adenosyl-L-methionine = 5-methylaminomethyl-2-thiouridine(34) in tRNA + S-adenosyl-L-homocysteine + H(+). In terms of biological role, catalyzes the last two steps in the biosynthesis of 5-methylaminomethyl-2-thiouridine (mnm(5)s(2)U) at the wobble position (U34) in tRNA. Catalyzes the FAD-dependent demodification of cmnm(5)s(2)U34 to nm(5)s(2)U34, followed by the transfer of a methyl group from S-adenosyl-L-methionine to nm(5)s(2)U34, to form mnm(5)s(2)U34. The chain is tRNA 5-methylaminomethyl-2-thiouridine biosynthesis bifunctional protein MnmC from Yersinia enterocolitica serotype O:8 / biotype 1B (strain NCTC 13174 / 8081).